The sequence spans 82 residues: MAEVSSAPVRRPFHRRRKTCPFSGANAPRIDYKDVRLLQRYISERGKIVPSRITAVSQKKQRELAQAIKRARFLGLLPYIVS.

This sequence belongs to the bacterial ribosomal protein bS18 family. As to quaternary structure, part of the 30S ribosomal subunit. Forms a tight heterodimer with protein bS6.

Binds as a heterodimer with protein bS6 to the central domain of the 16S rRNA, where it helps stabilize the platform of the 30S subunit. The polypeptide is Small ribosomal subunit protein bS18 (Rhizobium meliloti (strain 1021) (Ensifer meliloti)).